Consider the following 227-residue polypeptide: Cytochrome c oxidase subunit 2 (227 aa).

Topologically, residues 1–14 (MAYPFQLGFQDATS) are mitochondrial intermembrane. Residues 15–45 (PIMEELLHFHDHTLMIVFLISSLVLYIITLM) traverse the membrane as a helical segment. At 46 to 59 (LTTKLTHTSTMDAQ) the chain is on the mitochondrial matrix side. Residues 60 to 87 (EVETVWTILPAIILILIALPSLRILYMM) form a helical membrane-spanning segment. The Mitochondrial intermembrane segment spans residues 88 to 227 (DEVNNPSLTV…IFEKWSASML (140 aa)). H161, C196, E198, C200, H204, and M207 together coordinate Cu cation. Residue E198 coordinates Mg(2+).

The protein belongs to the cytochrome c oxidase subunit 2 family. As to quaternary structure, component of the cytochrome c oxidase (complex IV, CIV), a multisubunit enzyme composed of 14 subunits. The complex is composed of a catalytic core of 3 subunits MT-CO1, MT-CO2 and MT-CO3, encoded in the mitochondrial DNA, and 11 supernumerary subunits COX4I, COX5A, COX5B, COX6A, COX6B, COX6C, COX7A, COX7B, COX7C, COX8 and NDUFA4, which are encoded in the nuclear genome. The complex exists as a monomer or a dimer and forms supercomplexes (SCs) in the inner mitochondrial membrane with NADH-ubiquinone oxidoreductase (complex I, CI) and ubiquinol-cytochrome c oxidoreductase (cytochrome b-c1 complex, complex III, CIII), resulting in different assemblies (supercomplex SCI(1)III(2)IV(1) and megacomplex MCI(2)III(2)IV(2)). Found in a complex with TMEM177, COA6, COX18, COX20, SCO1 and SCO2. Interacts with TMEM177 in a COX20-dependent manner. Interacts with COX20. Interacts with COX16. It depends on Cu cation as a cofactor.

It localises to the mitochondrion inner membrane. It carries out the reaction 4 Fe(II)-[cytochrome c] + O2 + 8 H(+)(in) = 4 Fe(III)-[cytochrome c] + 2 H2O + 4 H(+)(out). Its function is as follows. Component of the cytochrome c oxidase, the last enzyme in the mitochondrial electron transport chain which drives oxidative phosphorylation. The respiratory chain contains 3 multisubunit complexes succinate dehydrogenase (complex II, CII), ubiquinol-cytochrome c oxidoreductase (cytochrome b-c1 complex, complex III, CIII) and cytochrome c oxidase (complex IV, CIV), that cooperate to transfer electrons derived from NADH and succinate to molecular oxygen, creating an electrochemical gradient over the inner membrane that drives transmembrane transport and the ATP synthase. Cytochrome c oxidase is the component of the respiratory chain that catalyzes the reduction of oxygen to water. Electrons originating from reduced cytochrome c in the intermembrane space (IMS) are transferred via the dinuclear copper A center (CU(A)) of subunit 2 and heme A of subunit 1 to the active site in subunit 1, a binuclear center (BNC) formed by heme A3 and copper B (CU(B)). The BNC reduces molecular oxygen to 2 water molecules using 4 electrons from cytochrome c in the IMS and 4 protons from the mitochondrial matrix. The chain is Cytochrome c oxidase subunit 2 (MT-CO2) from Balaenoptera borealis (Sei whale).